Here is a 547-residue protein sequence, read N- to C-terminus: Ribosomal lysine N-methyltransferase set10 (547 aa).

One can recognise an SET domain in the interval 17 to 235 (KSVEFIQSRD…KGNQLFNNYG (219 aa)). Y234 contacts S-adenosyl-L-methionine.

The protein belongs to the class V-like SAM-binding methyltransferase superfamily. RKM1 family.

It is found in the cytoplasm. Its subcellular location is the nucleus. S-adenosyl-L-methionine-dependent protein-lysine N-methyltransferase that methylates ribosomal protein L23 (rpl23a and rpl23b). This Schizosaccharomyces pombe (strain 972 / ATCC 24843) (Fission yeast) protein is Ribosomal lysine N-methyltransferase set10 (set10).